The sequence spans 487 residues: Betaine aldehyde dehydrogenase (487 aa).

Residues Ile27 and Asp93 each coordinate K(+). 149 to 151 (GAW) contributes to the NAD(+) binding site. Lys161 functions as the Charge relay system in the catalytic mechanism. NAD(+)-binding positions include 175–178 (KPSE) and 228–231 (SVPT). Residue Leu243 participates in K(+) binding. Glu249 (proton acceptor) is an active-site residue. Positions 251, 283, and 384 each coordinate NAD(+). Cys283 acts as the Nucleophile in catalysis. A Cysteine sulfenic acid (-SOH) modification is found at Cys283. K(+) contacts are provided by Lys454 and Gly457. Glu461 serves as the catalytic Charge relay system.

The protein belongs to the aldehyde dehydrogenase family. In terms of assembly, dimer of dimers. Requires K(+) as cofactor.

It catalyses the reaction betaine aldehyde + NAD(+) + H2O = glycine betaine + NADH + 2 H(+). Its pathway is amine and polyamine biosynthesis; betaine biosynthesis via choline pathway; betaine from betaine aldehyde: step 1/1. In terms of biological role, involved in the biosynthesis of the osmoprotectant glycine betaine. Catalyzes the irreversible oxidation of betaine aldehyde to the corresponding acid. This is Betaine aldehyde dehydrogenase from Brucella abortus (strain S19).